Consider the following 290-residue polypeptide: Syntaxin-2 (290 aa).

At 1–266 the chain is on the cytoplasmic side; that stretch reads MRDRLPDLTA…KYQSKARRKK (266 aa). Ser-14 carries the phosphoserine modification. A coiled-coil region spans residues 69 to 106; it reads EGKIKEELEDLNKEIKKTANRIRGKLKAIEQSCDQDEN. Residues 193 to 255 enclose the t-SNARE coiled-coil homology domain; it reads LNEIESRHKD…EHAKEETKKA (63 aa). A helical; Anchor for type IV membrane protein transmembrane segment spans residues 267–290; that stretch reads WIIAAVVVAVIAVLALIIGLTVGK.

The protein belongs to the syntaxin family. In terms of assembly, interacts with SYT6 and SYT8; the interaction is Ca(2+)-dependent. As to expression, heart, spleen, liver, and testis.

It localises to the membrane. Essential for epithelial morphogenesis. May mediate Ca(2+)-regulation of exocytosis acrosomal reaction in sperm. In Rattus norvegicus (Rat), this protein is Syntaxin-2 (Stx2).